A 443-amino-acid chain; its full sequence is Xaa-Pro dipeptidase (443 aa).

5 residues coordinate Mn(2+): Asp246, Asp257, His339, Glu384, and Glu423.

This sequence belongs to the peptidase M24B family. Bacterial-type prolidase subfamily. Requires Mn(2+) as cofactor.

It carries out the reaction Xaa-L-Pro dipeptide + H2O = an L-alpha-amino acid + L-proline. Functionally, splits dipeptides with a prolyl residue in the C-terminal position. The sequence is that of Xaa-Pro dipeptidase from Salmonella arizonae (strain ATCC BAA-731 / CDC346-86 / RSK2980).